We begin with the raw amino-acid sequence, 108 residues long: Small ribosomal subunit protein eS25x (108 aa).

Residues 1-36 form a disordered region; that stretch reads MAPKKDKVPPPSSKPAKSGGGKQKKKKWSKGKQKEK. A compositionally biased stretch (basic residues) spans 22-31; it reads KQKKKKWSKG.

The protein belongs to the eukaryotic ribosomal protein eS25 family.

The chain is Small ribosomal subunit protein eS25x (RPS25D) from Arabidopsis thaliana (Mouse-ear cress).